The primary structure comprises 476 residues: MHLFINMIFLINIVFIISIIFIERRNPQTTWAWILILTFLPILGFIIYILFGQNITREKNFKRKILDDKTKQKYLNSFKSHYKLDNISLKYKDLIMMNFNNDNSTYTQRNDIDLYFDANSLFEEMIDEINKAEKFIHMEFYIFKSDEIGKKILQALTKKAKEGVEVKLLVDSIGNSIHKKDIDKLKAAGGDFKIFFPGFCKYINLRINYRNHRKILIIDSKVAFLGGFNIGDEYLGKDKNIGHWRDTHTKIKGLAINDLEGRFLLDWSYANESDLDIDLKKYFINPHSTDLPKKIIGAQIVSSGPDHTEQQIKNGYFKIINSAKKNLFIQTPYFVPDEPMLEALRLAALSGVDVKIMLPGNPDHKFMGWIANSYFESLLNAGAKIYLYEKGFLHAKTIVADSSICSVGTANMDIRSFSLNFESNIFIYNEAISKSMEEQFFKDLKVCTKVTLESFEKRSIISRIGESITRLVSPLM.

2 consecutive transmembrane segments (helical) span residues 2–22 and 31–51; these read HLFI…IIFI and WAWI…YILF. PLD phosphodiesterase domains are found at residues 207 to 234 and 389 to 416; these read INYR…GDEY and EKGF…DIRS. Residues histidine 212, lysine 214, aspartate 219, histidine 394, lysine 396, and aspartate 401 contribute to the active site.

Belongs to the phospholipase D family. Cardiolipin synthase subfamily.

It localises to the cell membrane. It catalyses the reaction 2 a 1,2-diacyl-sn-glycero-3-phospho-(1'-sn-glycerol) = a cardiolipin + glycerol. Functionally, catalyzes the reversible phosphatidyl group transfer from one phosphatidylglycerol molecule to another to form cardiolipin (CL) (diphosphatidylglycerol) and glycerol. The chain is Cardiolipin synthase (cls) from Clostridium perfringens (strain 13 / Type A).